A 406-amino-acid polypeptide reads, in one-letter code: Acetylornithine/succinyldiaminopimelate aminotransferase (406 aa).

Pyridoxal 5'-phosphate is bound by residues 108-109 (GT) and Phe141. N(2)-acetyl-L-ornithine is bound at residue Arg144. Residue 226-229 (DEVQ) participates in pyridoxal 5'-phosphate binding. An N6-(pyridoxal phosphate)lysine modification is found at Lys255. A N(2)-acetyl-L-ornithine-binding site is contributed by Ser283. Thr284 lines the pyridoxal 5'-phosphate pocket.

This sequence belongs to the class-III pyridoxal-phosphate-dependent aminotransferase family. ArgD subfamily. In terms of assembly, homodimer. Pyridoxal 5'-phosphate is required as a cofactor.

Its subcellular location is the cytoplasm. The catalysed reaction is N(2)-acetyl-L-ornithine + 2-oxoglutarate = N-acetyl-L-glutamate 5-semialdehyde + L-glutamate. The enzyme catalyses N-succinyl-(2S,6S)-2,6-diaminopimelate + 2-oxoglutarate = (S)-2-succinylamino-6-oxoheptanedioate + L-glutamate. The protein operates within amino-acid biosynthesis; L-arginine biosynthesis; N(2)-acetyl-L-ornithine from L-glutamate: step 4/4. It participates in amino-acid biosynthesis; L-lysine biosynthesis via DAP pathway; LL-2,6-diaminopimelate from (S)-tetrahydrodipicolinate (succinylase route): step 2/3. Involved in both the arginine and lysine biosynthetic pathways. This chain is Acetylornithine/succinyldiaminopimelate aminotransferase, found in Escherichia coli O157:H7.